Here is a 1141-residue protein sequence, read N- to C-terminus: cGMP-inhibited 3',5'-cyclic phosphodiesterase 3A (1141 aa).

The segment at 1–41 is disordered; that stretch reads MAVRGEAAQDWAKPGLRGPSPAPVARGDHRCRGGSPSSPRG. A helical transmembrane segment spans residues 62 to 82; sequence SALCAGSLSVLLALLVRLVGG. Residues 89–111 are disordered; it reads ESSQEAAAEEEEEEGARGGVFPG. A run of 5 helical transmembrane segments spans residues 127 to 147, 157 to 177, 182 to 202, 207 to 227, and 229 to 249; these read LQPA…GLCL, AVAL…SLGV, LLSL…TWLV, LGVL…VSLE, and FKVA…LLLA. A disordered region spans residues 262–309; it reads PAPPRERFGSQSSARTKEEIPGWKRRRRSSSVVAGEMSGCGGKSHRRT. Serine 310 carries the phosphoserine modification. Over residues 433 to 445 the composition is skewed to low complexity; that stretch reads RVSSTWTTTTSAT. A disordered region spans residues 433–479; sequence RVSSTWTTTTSATGLPTLEPAPVRRDRSASIKPHEAPSPSAVNPDSW. Basic and acidic residues predominate over residues 454-467; it reads PVRRDRSASIKPHE. Serine 492, serine 520, serine 524, and serine 533 each carry phosphoserine. The tract at residues 504–643 is disordered; the sequence is HVKAKKQNRP…SDILQNDEEA (140 aa). Over residues 522–532 the composition is skewed to pro residues; sequence VPSPSSSPPQG. Polar residues predominate over residues 618–637; sequence TSQVTSDYETNNNSDSSDIL. Residues 669-1141 form an interaction with SLFN12 region; it reads KPILAPEPLV…EETLAPQPDL (473 aa). Residues 674 to 1093 form the PDEase domain; the sequence is PEPLVMDNLD…MMWKKVIEEE (420 aa). The active-site Proton donor is histidine 752. Residue histidine 752 coordinates AMP. Positions 756, 836, 837, and 950 each coordinate Mn(2+). The AMP site is built by aspartate 837, aspartate 950, and glutamine 1001. Residue aspartate 837 participates in Mg(2+) binding. Disordered stretches follow at residues 1024–1062 and 1098–1141; these read GKWV…EAPR and GTEN…QPDL. The segment covering 1029-1046 has biased composition (acidic residues); the sequence is DSDDSGDTDDPEEEEEEA. The residue at position 1033 (serine 1033) is a Phosphoserine. The residue at position 1036 (threonine 1036) is a Phosphothreonine. The segment covering 1098–1113 has biased composition (polar residues); the sequence is GTENQAPDQAPLQHSS. Residue lysine 1120 forms a Glycyl lysine isopeptide (Lys-Gly) (interchain with G-Cter in SUMO2) linkage.

This sequence belongs to the cyclic nucleotide phosphodiesterase family. PDE3 subfamily. As to quaternary structure, homodimer. Interacts with PDE3A; direct low affinity interaction which is stimulated by binding of 17beta-estradiol/E2 to PDE3A and that positively regulates the ribonuclease activity of SLFN12. Mn(2+) is required as a cofactor. Requires Mg(2+) as cofactor.

The protein localises to the membrane. It localises to the cytoplasm. The protein resides in the cytosol. The catalysed reaction is a nucleoside 3',5'-cyclic phosphate + H2O = a nucleoside 5'-phosphate + H(+). It carries out the reaction 3',5'-cyclic AMP + H2O = AMP + H(+). It catalyses the reaction 3',5'-cyclic GMP + H2O = GMP + H(+). The enzyme catalyses 3',5'-cyclic UMP + H2O = UMP + H(+). In terms of biological role, cyclic nucleotide phosphodiesterase with specificity for the second messengers cAMP and cGMP, which are key regulators of many important physiological processes. Also has activity toward cUMP. Independently of its catalytic activity it is part of an E2/17beta-estradiol-induced pro-apoptotic signaling pathway. E2 stabilizes the PDE3A/SLFN12 complex in the cytosol, promoting the dephosphorylation of SLFN12 and activating its pro-apoptotic ribosomal RNA/rRNA ribonuclease activity. This apoptotic pathway might be relevant in tissues with high concentration of E2 and be for instance involved in placenta remodeling. In Rattus norvegicus (Rat), this protein is cGMP-inhibited 3',5'-cyclic phosphodiesterase 3A.